We begin with the raw amino-acid sequence, 394 residues long: Mucosal addressin cell adhesion molecule 1 (394 aa).

Positions 1–19 are cleaved as a signal peptide; the sequence is MEPILALLLALGPFQLSRG. Ig-like domains follow at residues 20 to 107, 108 to 225, and 256 to 345; these read QSFQ…ILVY, AFPD…TSPE, and PSTP…YVTG. Over 20 to 353 the chain is Extracellular; it reads QSFQVNPPEP…TGQVIPNPSS (334 aa). Asn42 is a glycosylation site (N-linked (GlcNAc...) asparagine). Disulfide bonds link Cys43–Cys89, Cys47–Cys93, and Cys130–Cys198. The segment at 219 to 255 is mucin-like; that stretch reads QSQTSPEPPSTTSAKPYILTSSHTTKAVSTGLSSVAL. A disulfide bridge links Cys282 with Cys330. The helical transmembrane segment at 354–374 threads the bilayer; it reads MVALWIGSLVLGLLALAFLAY. At 375–394 the chain is on the cytoplasmic side; it reads CLWKRYRPGPLPDSSSCTLL.

As to quaternary structure, homodimer. Detected in Peyer patches and mesenteric lymph nodes but not in spleen.

The protein resides in the membrane. In terms of biological role, cell adhesion leukocyte receptor expressed by mucosal venules, helps to direct lymphocyte traffic into mucosal tissues including the Peyer patches and the intestinal lamina propria. It can bind both the integrin alpha-4/beta-7 and L-selectin, regulating both the passage and retention of leukocytes. The polypeptide is Mucosal addressin cell adhesion molecule 1 (Madcam1) (Rattus norvegicus (Rat)).